The chain runs to 179 residues: Replication restart protein DnaT (179 aa).

Residues 156 to 179 (GGLPKRDVNTVSEPDSQIPPGFRG) are disordered.

This sequence belongs to the DnaT family. In terms of assembly, homooligomerizes. Interacts with PriB. Component of the replication restart primosome. Primosome assembly occurs via a 'hand-off' mechanism. PriA binds to replication forks, subsequently PriB then DnaT bind; DnaT then displaces ssDNA to generate the helicase loading substrate.

Its function is as follows. Involved in the restart of stalled replication forks, which reloads the replicative helicase on sites other than the origin of replication. Can function in multiple replication restart pathways. Displaces ssDNA from a PriB-ssDNA complex. Probably forms a spiral filament on ssDNA. The protein is Replication restart protein DnaT of Shigella boydii serotype 18 (strain CDC 3083-94 / BS512).